An 89-amino-acid polypeptide reads, in one-letter code: Putative membrane protein insertion efficiency factor (89 aa).

Residues 69-89 (DPVPPAHTERGGTMCPSRLPE) are disordered.

This sequence belongs to the UPF0161 family.

It localises to the cell inner membrane. Functionally, could be involved in insertion of integral membrane proteins into the membrane. The sequence is that of Putative membrane protein insertion efficiency factor from Paramagnetospirillum magneticum (strain ATCC 700264 / AMB-1) (Magnetospirillum magneticum).